The primary structure comprises 401 residues: Chromatin modification-related protein EAF3 (401 aa).

Residues 13 to 98 (RCLAFHGPLM…DEWVGYDRIR (86 aa)) form the Tudor-knot domain. Over residues 39–53 (TSIPNDKPGGSSQAT) the composition is skewed to polar residues. Disordered stretches follow at residues 39–65 (TSIP…GEDE) and 117–210 (EAKK…NMLH). 2 stretches are compositionally biased toward basic and acidic residues: residues 54 to 63 (KEIKPQKLGE) and 117 to 126 (EAKKSLLEQQ). A compositionally biased stretch (low complexity) spans 153-190 (SISKSTSQSFLTSSVSGRKSGRSSANSLHPGSSLRSSS). S201 is subject to Phosphoserine. The MRG domain maps to 216-399 (PTPKISLQIP…TSSQYEGVAL (184 aa)).

It belongs to the MRG family. Component of the NuA4 histone acetyltransferase complex composed of at least ACT1, ARP4, YAF9, VID21, SWC4, EAF3, EAF5, EAF6, EAF7, EPL1, ESA1, TRA1 and YNG2.

The protein localises to the nucleus. Its function is as follows. Component of the NuA4 histone acetyltransferase complex which is involved in transcriptional activation of selected genes principally by acetylation of nucleosomal histone H4 and H2A. The NuA4 complex is also involved in DNA repair. The polypeptide is Chromatin modification-related protein EAF3 (EAF3) (Saccharomyces cerevisiae (strain ATCC 204508 / S288c) (Baker's yeast)).